The following is a 232-amino-acid chain: tRNA pseudouridine synthase B (232 aa).

Aspartate 53 acts as the Nucleophile in catalysis.

The protein belongs to the pseudouridine synthase TruB family. Type 1 subfamily.

It catalyses the reaction uridine(55) in tRNA = pseudouridine(55) in tRNA. Its function is as follows. Responsible for synthesis of pseudouridine from uracil-55 in the psi GC loop of transfer RNAs. This is tRNA pseudouridine synthase B from Malacoplasma penetrans (strain HF-2) (Mycoplasma penetrans).